A 114-amino-acid chain; its full sequence is MTAPALSARGAYRQILRATRIAFHEDTRVLLAARQEARRQFDEHKRVGIDTPMQINHAIEVASILKHNIVQGVKPEGDEAAKWELRIHDDIERGDNDSIKHAGKDIKIHKACSA.

Residues M1–A18 constitute a mitochondrion transit peptide.

This sequence belongs to the complex I LYR family. MZM1 subfamily. As to quaternary structure, interacts with RIP1.

Its subcellular location is the mitochondrion matrix. In terms of biological role, assembly factor required for Rieske Fe-S protein RIP1 incorporation into the cytochrome b-c1 (CIII) complex. Functions as a chaperone, binding to this subunit within the mitochondrial matrix and stabilizing it prior to its translocation and insertion into the late CIII dimeric intermediate within the mitochondrial inner membrane. Modulates the mitochondrial matrix zinc pool. The sequence is that of Mitochondrial zinc maintenance protein 1, mitochondrial (MZM1) from Aspergillus oryzae (strain ATCC 42149 / RIB 40) (Yellow koji mold).